The chain runs to 322 residues: Breast cancer metastasis-suppressor 1-like protein (322 aa).

A compositionally biased stretch (basic and acidic residues) spans 1–16; sequence MPVHSREKKESNHNDM. Residues 1-56 form a disordered region; sequence MPVHSREKKESNHNDMEVDYPENEGTSSEEDDSDSSSGSEEGDSSEMDDEDCERRR. Over residues 17 to 51 the composition is skewed to acidic residues; sequence EVDYPENEGTSSEEDDSDSSSGSEEGDSSEMDDED. Coiled coils occupy residues 50-82 and 147-178; these read EDCE…KERL and EKLL…ITSE.

Belongs to the BRMS1 family.

The protein resides in the nucleus. Involved in the histone deacetylase (HDAC1)-dependent transcriptional repression activity. This is Breast cancer metastasis-suppressor 1-like protein (brms1l) from Xenopus tropicalis (Western clawed frog).